Reading from the N-terminus, the 143-residue chain is Large ribosomal subunit protein uL16c (143 aa).

This sequence belongs to the universal ribosomal protein uL16 family. As to quaternary structure, part of the 50S ribosomal subunit.

The protein localises to the plastid. It is found in the chloroplast. The chain is Large ribosomal subunit protein uL16c from Cyanidioschyzon merolae (strain NIES-3377 / 10D) (Unicellular red alga).